The sequence spans 707 residues: Choline transporter-like protein 4 (707 aa).

Topologically, residues 1-32 (MGRKQNENEAHGNSAKYDPSFRGPIKNRGCTD) are cytoplasmic. A helical membrane pass occupies residues 33–53 (IICCVLFLIFILGYIIVGLVA). At 54–227 (WVYGDPRQVL…KIFEDFAQSW (174 aa)) the chain is on the extracellular side. N-linked (GlcNAc...) asparagine glycans are attached at residues Asn67, Asn185, Asn195, and Asn196. Residues 228 to 248 (YWILVALGVALALSLLFILLL) traverse the membrane as a helical segment. The Cytoplasmic segment spans residues 249–250 (RL). The chain crosses the membrane as a helical span at residues 251–271 (VAAPLVLLLIVGVLAVLAYGI). Residues 272–307 (YHCWQQYQVFRDKGASITQLGFTTNFSAYQSVKETW) are Extracellular-facing. The N-linked (GlcNAc...) asparagine glycan is linked to Asn296. A helical transmembrane segment spans residues 308–328 (LAALIVLAVLEGILLLMLIFL). Topologically, residues 329 to 356 (RQRIRIAIALLKEASRAVGQMMSTMFYP) are cytoplasmic. A helical membrane pass occupies residues 357–377 (LVTFVLLVICIGYWAVTALYL). Residues 378–452 (ATSGQPQYIY…GVLGLFWTVN (75 aa)) are Extracellular-facing. 3 N-linked (GlcNAc...) asparagine glycosylation sites follow: Asn391, Asn403, and Asn413. Residues 453–473 (WVLALGQCVLAGAFASFYWAF) form a helical membrane-spanning segment. Residues 474–498 (HKPRDIPTFPLSSAFIRTLRYHTGS) lie on the Cytoplasmic side of the membrane. The helical transmembrane segment at 499–519 (LAFGALILSLVQIARVILEYI) threads the bilayer. Over 520–557 (DHKLRGSQNPVARCIICCFKCCLWCLEKFIKFLNRNAY) the chain is Extracellular. A helical transmembrane segment spans residues 558 to 578 (IMIAIYGKNFCVSAKNAFMLL). The Cytoplasmic portion of the chain corresponds to 579–594 (MRNVLRVVVLDKVTDL). Residues 595-615 (LLFFGKLLVVGGVGVLSFFFF) form a helical membrane-spanning segment. The Extracellular portion of the chain corresponds to 616 to 635 (SGRIKGLGKDFENPNLNYYW). The chain crosses the membrane as a helical span at residues 636-656 (LPIMTSIMGAYVIASGFFSVF). Residues 657–707 (GMCVDTLFLCFLEDLERNDGSQERPYYMPKALLKILGKKNEAPTGGKTRKK) lie on the Cytoplasmic side of the membrane.

Belongs to the CTL (choline transporter-like) family. N-glycosylated; N-glycosylation of Asn-67 and Asn-391 is required for a proper thiamine pyrophosphate uptake. As to expression, expressed in colon and cecum.

It is found in the membrane. Its subcellular location is the apical cell membrane. The catalysed reaction is choline(out) + n H(+)(in) = choline(in) + n H(+)(out). It catalyses the reaction thiamine diphosphate(out) = thiamine diphosphate(in). Its function is as follows. Choline transporter that plays a role in the choline-acetylcholine system and is required to the efferent innervation of hair cells in the olivocochlear bundle for the maintenance of physiological function of outer hair cells and the protection of hair cells from acoustic injury. Also described as a thiamine pyrophosphate transporter in colon, may mediate the absorption of microbiota-generated thiamine pyrophosphate and contribute to host thiamine (vitamin B1) homeostasis. The polypeptide is Choline transporter-like protein 4 (Mus musculus (Mouse)).